The sequence spans 76 residues: Rhesus theta defensin-1/3 subunit A (76 aa).

The first 22 residues, 1–22 (MRTFALLTAMLLLVALHAQAEA), serve as a signal peptide directing secretion. Positions 23–64 (RQARADEAAAQQQPGTDDQGMAHSFTWPENAALPLSESAKGL) are excised as a propeptide. The disordered stretch occupies residues 25–45 (ARADEAAAQQQPGTDDQGMAH). Residue Arg65 forms a Cyclopeptide (Arg-Cys) (interchain with C-73 in subunit A); in form RTD-3 linkage. Residue Arg65 forms a Cyclopeptide (Arg-Cys) (interchain with C-73 in subunit B); in form RTD-1 linkage. Residues Cys68 and Cys73 are joined by a disulfide bond. Cys73 participates in a covalent cross-link: Cyclopeptide (Cys-Arg) (interchain with R-65 in subunit A); in form RTD-3. A Cyclopeptide (Cys-Arg) (interchain with R-65 in subunit B); in form RTD-1 cross-link involves residue Cys73. Positions 74-76 (RLL) are excised as a propeptide.

The protein belongs to the alpha-defensin family. Theta subfamily. In terms of assembly, RTD-1 is a cyclic heterodimer composed of subunits A and B; disulfide-linked. RTD-3 is a cyclic homodimer composed of two subunits A; disulfide-linked. Post-translationally, forms a cyclic peptide with subunit A (RTD-3) or with subunit B (RTD-1). An additional intersubunit disulfide bond is formed. RTD-1 is expressed in bone marrow. Detected in promyelocytes, myelocytes and mature neutrophils and monocytes.

RTD-1 and RTD-3 have similar antimicrobial activities against the Gram-positive bacteria S.aureus 502A and L.monocytogenes, the Gram-negative bacteria S.typhimurium and E.coli ML35, and the fungi C.albicans 16820 and C.neoformans 271A. This chain is Rhesus theta defensin-1/3 subunit A (RTD1A), found in Macaca mulatta (Rhesus macaque).